The primary structure comprises 216 residues: Thiopurine S-methyltransferase (216 aa).

S-adenosyl-L-methionine is bound by residues W10, L45, E66, and R123.

The protein belongs to the class I-like SAM-binding methyltransferase superfamily. TPMT family.

Its subcellular location is the cytoplasm. The enzyme catalyses S-adenosyl-L-methionine + a thiopurine = S-adenosyl-L-homocysteine + a thiopurine S-methylether.. The sequence is that of Thiopurine S-methyltransferase from Pseudomonas putida (strain ATCC 700007 / DSM 6899 / JCM 31910 / BCRC 17059 / LMG 24140 / F1).